A 341-amino-acid chain; its full sequence is tRNA N6-adenosine threonylcarbamoyltransferase (341 aa).

Positions 111 and 115 each coordinate Fe cation. Substrate-binding positions include Leu134–Gly138, Asp167, Gly180, and Asn276. Fe cation is bound at residue Asp304.

This sequence belongs to the KAE1 / TsaD family. Fe(2+) is required as a cofactor.

It is found in the cytoplasm. The enzyme catalyses L-threonylcarbamoyladenylate + adenosine(37) in tRNA = N(6)-L-threonylcarbamoyladenosine(37) in tRNA + AMP + H(+). Its function is as follows. Required for the formation of a threonylcarbamoyl group on adenosine at position 37 (t(6)A37) in tRNAs that read codons beginning with adenine. Is involved in the transfer of the threonylcarbamoyl moiety of threonylcarbamoyl-AMP (TC-AMP) to the N6 group of A37, together with TsaE and TsaB. TsaD likely plays a direct catalytic role in this reaction. This chain is tRNA N6-adenosine threonylcarbamoyltransferase, found in Pseudomonas entomophila (strain L48).